A 258-amino-acid polypeptide reads, in one-letter code: Meiotic drive suppressor wtf20 (258 aa).

The tract at residues 1-71 is disordered; sequence MKNNYTSLKS…GPTEIANPNV (71 aa). Basic and acidic residues predominate over residues 19–30; sequence KTDHEIDLEKGL. Transmembrane regions (helical) follow at residues 84–106, 121–140, and 196–216; these read IYFL…TAWV, FSVT…FYFY, and SASA…AETV.

Belongs to the WTF family. In terms of assembly, homomer. Interacts with other proteins that exhibit high sequence similarity.

Its subcellular location is the spore membrane. It localises to the vacuole membrane. Acts as a suppressor component of the dual wtf meiotic drive system, and can suppress but not confer meiotic drive by compatible poisons. Wtf meiotic drive systems promote unequal transmission of alleles from the parental zygote to progeny spores by encoding a poison and an antidote from the same locus; the poison is trans-acting and forms toxic aggregates in all spores within an ascus, wherease the antidote is spore-specific and targets aggregates for degradation by the vacuole. Meiotic drive by wtf systems therefore lead to poisoning of all progeny that do not inherit the dual poison/antidote allele, or express a compatible antidote. The polypeptide is Meiotic drive suppressor wtf20 (Schizosaccharomyces pombe (strain 972 / ATCC 24843) (Fission yeast)).